The primary structure comprises 409 residues: 5-aminolevulinate synthase (409 aa).

Substrate contacts are provided by R21, S137, and K156. Residues S189, H217, and T245 each contribute to the pyridoxal 5'-phosphate site. The active site involves K248. K248 bears the N6-(pyridoxal phosphate)lysine mark. 2 residues coordinate pyridoxal 5'-phosphate: T277 and T278. T365 is a binding site for substrate.

Belongs to the class-II pyridoxal-phosphate-dependent aminotransferase family. As to quaternary structure, homodimer. The cofactor is pyridoxal 5'-phosphate.

The enzyme catalyses succinyl-CoA + glycine + H(+) = 5-aminolevulinate + CO2 + CoA. The protein operates within porphyrin-containing compound metabolism; protoporphyrin-IX biosynthesis; 5-aminolevulinate from glycine: step 1/1. The chain is 5-aminolevulinate synthase (hemA) from Paracoccus denitrificans (strain Pd 1222).